The primary structure comprises 267 residues: Hydroxynaphthalene reductase-like protein Arp2 (267 aa).

Residues Ile-25, Asn-45, Asp-71, and Asn-98 each contribute to the NADP(+) site. Active-site proton donor residues include Ser-147 and Ser-148. Residues Tyr-162, Lys-166, Val-195, and Thr-197 each coordinate NADP(+). Tyr-162 acts as the Proton acceptor in catalysis. The active-site Lowers pKa of active site Tyr is the Lys-166.

The protein belongs to the short-chain dehydrogenases/reductases (SDR) family.

Functionally, hydroxynaphthalene reductase-like protein; part of the Pks2 gene cluster that mediates the formation of infectious structures (appressoria), enabling these fungi to kill insects faster. The product of the Pks2 gene cluster is different from the one of Pks1 and has still not been identified. The protein is Hydroxynaphthalene reductase-like protein Arp2 of Metarhizium guizhouense (strain ARSEF 977).